The following is a 147-amino-acid chain: Protein-export protein SecB (147 aa).

The protein belongs to the SecB family. In terms of assembly, homotetramer, a dimer of dimers. One homotetramer interacts with 1 SecA dimer.

It is found in the cytoplasm. Its function is as follows. One of the proteins required for the normal export of preproteins out of the cell cytoplasm. It is a molecular chaperone that binds to a subset of precursor proteins, maintaining them in a translocation-competent state. It also specifically binds to its receptor SecA. This chain is Protein-export protein SecB, found in Neisseria gonorrhoeae (strain ATCC 700825 / FA 1090).